A 257-amino-acid chain; its full sequence is Imidazole glycerol phosphate synthase subunit HisF (257 aa).

Active-site residues include aspartate 11 and aspartate 130.

It belongs to the HisA/HisF family. Heterodimer of HisH and HisF.

It is found in the cytoplasm. The enzyme catalyses 5-[(5-phospho-1-deoxy-D-ribulos-1-ylimino)methylamino]-1-(5-phospho-beta-D-ribosyl)imidazole-4-carboxamide + L-glutamine = D-erythro-1-(imidazol-4-yl)glycerol 3-phosphate + 5-amino-1-(5-phospho-beta-D-ribosyl)imidazole-4-carboxamide + L-glutamate + H(+). It participates in amino-acid biosynthesis; L-histidine biosynthesis; L-histidine from 5-phospho-alpha-D-ribose 1-diphosphate: step 5/9. In terms of biological role, IGPS catalyzes the conversion of PRFAR and glutamine to IGP, AICAR and glutamate. The HisF subunit catalyzes the cyclization activity that produces IGP and AICAR from PRFAR using the ammonia provided by the HisH subunit. The chain is Imidazole glycerol phosphate synthase subunit HisF from Aliivibrio fischeri (strain ATCC 700601 / ES114) (Vibrio fischeri).